Here is a 41-residue protein sequence, read N- to C-terminus: Large ribosomal subunit protein bL36 (41 aa).

It belongs to the bacterial ribosomal protein bL36 family.

The polypeptide is Large ribosomal subunit protein bL36 (Pelagibacter ubique (strain HTCC1062)).